The sequence spans 488 residues: Proline--tRNA ligase (488 aa).

Belongs to the class-II aminoacyl-tRNA synthetase family. ProS type 3 subfamily. Homodimer.

It is found in the cytoplasm. It catalyses the reaction tRNA(Pro) + L-proline + ATP = L-prolyl-tRNA(Pro) + AMP + diphosphate. Catalyzes the attachment of proline to tRNA(Pro) in a two-step reaction: proline is first activated by ATP to form Pro-AMP and then transferred to the acceptor end of tRNA(Pro). The protein is Proline--tRNA ligase of Borrelia garinii subsp. bavariensis (strain ATCC BAA-2496 / DSM 23469 / PBi) (Borreliella bavariensis).